We begin with the raw amino-acid sequence, 89 residues long: Small ribosomal subunit protein uS15 (89 aa).

The protein belongs to the universal ribosomal protein uS15 family. As to quaternary structure, part of the 30S ribosomal subunit. Forms a bridge to the 50S subunit in the 70S ribosome, contacting the 23S rRNA.

Its function is as follows. One of the primary rRNA binding proteins, it binds directly to 16S rRNA where it helps nucleate assembly of the platform of the 30S subunit by binding and bridging several RNA helices of the 16S rRNA. Forms an intersubunit bridge (bridge B4) with the 23S rRNA of the 50S subunit in the ribosome. The sequence is that of Small ribosomal subunit protein uS15 from Streptococcus thermophilus (strain CNRZ 1066).